The following is a 224-amino-acid chain: LexA repressor (224 aa).

Positions 38–58 (IREIGDAVGLTSTSSVAHQLR) form a DNA-binding region, H-T-H motif. Basic and acidic residues predominate over residues 71-82 (NRPRAVDVRGID). Residues 71-96 (NRPRAVDVRGIDDAGTPSATTDVIGS) form a disordered region. Residues S148 and K185 each act as for autocatalytic cleavage activity in the active site.

It belongs to the peptidase S24 family. Homodimer.

It catalyses the reaction Hydrolysis of Ala-|-Gly bond in repressor LexA.. Its function is as follows. Represses a number of genes involved in the response to DNA damage (SOS response), including recA and lexA. In the presence of single-stranded DNA, RecA interacts with LexA causing an autocatalytic cleavage which disrupts the DNA-binding part of LexA, leading to derepression of the SOS regulon and eventually DNA repair. This Mycobacteroides abscessus (strain ATCC 19977 / DSM 44196 / CCUG 20993 / CIP 104536 / JCM 13569 / NCTC 13031 / TMC 1543 / L948) (Mycobacterium abscessus) protein is LexA repressor.